Here is a 53-residue protein sequence, read N- to C-terminus: Lantibiotic paenibacillin (53 aa).

A propeptide spanning residues 1-24 is cleaved from the precursor; sequence MKVDQMFDLDLRKSYEASELSPQA. Alanine 24 is subject to N-acetylalanine. The residue at position 25 (serine 25) is a 2,3-didehydroalanine (Ser). 2,3-didehydrobutyrine is present on residues threonine 29 and threonine 30. Positions 34 to 38 form a cross-link, lanthionine (Ser-Cys); that stretch reads SKAVC. Cross-links (beta-methyllanthionine (Thr-Cys)) lie at residues 40–43, 42–45, and 46–49; these read TLTC, TCIC, and TGSC. A cross-link (lanthionine (Ser-Cys)) is located at residues 48–52; it reads SCSNC. The residue at position 50 (serine 50) is a 2,3-didehydroalanine (Ser).

Maturation of lantibiotics involves the enzymatic conversion of Thr, and Ser into dehydrated AA and the formation of thioether bonds with cysteine. This is followed by membrane translocation and cleavage of the modified precursor. In terms of processing, the structure of the 2,3-didehydrobutyrines is not discussed in PubMed:17071789.

It is found in the secreted. Lanthionine-containing peptide antibiotic (lantibiotic) active on Gram-positive bacteria. The bactericidal activity of lantibiotics is based on depolarization of energized bacterial cytoplasmic membranes, initiated by the formation of aqueous transmembrane pores. Lacks antibacterial activity against Gram-negative bacteria. The protein is Lantibiotic paenibacillin of Paenibacillus polymyxa (Bacillus polymyxa).